Here is a 123-residue protein sequence, read N- to C-terminus: Ig heavy chain V region HPCG14 (123 aa).

An Ig-like domain is found at Glu1–Gly114.

This chain is Ig heavy chain V region HPCG14, found in Mus musculus (Mouse).